The sequence spans 359 residues: MSQYDVEPLLSKAAILNKYADLPQNGKVMAEYIWIDGFNHLRSKTMTLDAKPSSIDQLRVWNFDGSSTGQAPGNNSDTLLKPVAMYNDPFRRGDNILVLAACYTADGSPNGFNHRDACAKLLEKHADKETWFGIEQEYTMLDYYDRPFGWPKGGFPGPQGPFYCGVGTGRVFARDIVEAHYKACLYAGINISGINAEVMPSQWEYQVGPCAGIEMGDQLWMSRFLLHRIAEDFGVKISFHPKPILGDWNGAGCHTNVSTKDTRAEGGIKAIESYLEKFAKRHKEHIAVYGDDNDLRLTGRHETGSIDKFTYGVADRGASVRIPRSVAMNGCGYFEDRRPASSIDPYLVTGIITETMFEH.

One can recognise a GS beta-grasp domain in the interval Val-28–Gly-107. The 246-residue stretch at His-114–His-359 folds into the GS catalytic domain. Ser-273 bears the Phosphoserine mark. A Phosphothreonine modification is found at Thr-303. Phosphoserine is present on Ser-305.

This sequence belongs to the glutamine synthetase family. Homooctamer.

The protein localises to the cytoplasm. The enzyme catalyses L-glutamate + NH4(+) + ATP = L-glutamine + ADP + phosphate + H(+). The sequence is that of Glutamine synthetase (gln1) from Schizosaccharomyces pombe (strain 972 / ATCC 24843) (Fission yeast).